Reading from the N-terminus, the 116-residue chain is Ribosome-binding factor A (116 aa).

This sequence belongs to the RbfA family. As to quaternary structure, monomer. Binds 30S ribosomal subunits, but not 50S ribosomal subunits or 70S ribosomes.

The protein resides in the cytoplasm. In terms of biological role, one of several proteins that assist in the late maturation steps of the functional core of the 30S ribosomal subunit. Associates with free 30S ribosomal subunits (but not with 30S subunits that are part of 70S ribosomes or polysomes). Required for efficient processing of 16S rRNA. May interact with the 5'-terminal helix region of 16S rRNA. The protein is Ribosome-binding factor A of Staphylococcus epidermidis (strain ATCC 35984 / DSM 28319 / BCRC 17069 / CCUG 31568 / BM 3577 / RP62A).